The primary structure comprises 184 residues: MKNITDSFVSLGHWPSAGSFGFNTDILATNLINLSVVLGVLIFFGKGVLSDLLDNRKQRILDTIRNSEKLREGAIEQLEKARARLRKVEIEADQFRTNGYSEIEREKLNLINSTYKTLEQLENYKNETIHFEQQRTINQVRQRVFQQALQGALGTLNSCLTNELHLRTINANLGMFGAIKEITD.

Residues 27-49 form a helical membrane-spanning segment; the sequence is LATNLINLSVVLGVLIFFGKGVL.

It belongs to the ATPase B chain family. As to quaternary structure, F-type ATPases have 2 components, F(1) - the catalytic core - and F(0) - the membrane proton channel. F(1) has five subunits: alpha(3), beta(3), gamma(1), delta(1), epsilon(1). F(0) has four main subunits: a(1), b(1), b'(1) and c(10-14). The alpha and beta chains form an alternating ring which encloses part of the gamma chain. F(1) is attached to F(0) by a central stalk formed by the gamma and epsilon chains, while a peripheral stalk is formed by the delta, b and b' chains.

It localises to the plastid. The protein localises to the chloroplast thylakoid membrane. In terms of biological role, f(1)F(0) ATP synthase produces ATP from ADP in the presence of a proton or sodium gradient. F-type ATPases consist of two structural domains, F(1) containing the extramembraneous catalytic core and F(0) containing the membrane proton channel, linked together by a central stalk and a peripheral stalk. During catalysis, ATP synthesis in the catalytic domain of F(1) is coupled via a rotary mechanism of the central stalk subunits to proton translocation. Component of the F(0) channel, it forms part of the peripheral stalk, linking F(1) to F(0). This chain is ATP synthase subunit b, chloroplastic, found in Manihot esculenta (Cassava).